A 361-amino-acid chain; its full sequence is Aurora kinase B-A (361 aa).

Residues 93-343 (FDIGRPLGKG…LKGVMEHPWV (251 aa)) enclose the Protein kinase domain. Residues 99–107 (LGKGKFGNV) and Lys122 each bind ATP. The Proton acceptor role is filled by Asp216.

This sequence belongs to the protein kinase superfamily. Ser/Thr protein kinase family. Aurora subfamily. Component of the CPC at least composed of survivin/birc5, incenp, cdca8/borealin and/or cdca9/dasra-A, and aurkb/aurora-B. Interacts directly (via N-terminus and kinase domain) with incenp (via C terminus), and may weakly interact (via N-terminus) with birc5.1 to stabilize the complex. Interacts with mtus1. Mg(2+) serves as cofactor. Post-translationally, phosphorylated, stimulates kinase activity.

Its subcellular location is the nucleus. The protein resides in the chromosome. It carries out the reaction L-seryl-[protein] + ATP = O-phospho-L-seryl-[protein] + ADP + H(+). The enzyme catalyses L-threonyl-[protein] + ATP = O-phospho-L-threonyl-[protein] + ADP + H(+). Kinase activity is stimulated by both birc5/survivin-binding and cell-cycle specific phosphorylation. Serine/threonine-protein kinase component of the chromosomal passenger complex (CPC), a complex that acts as a key regulator of mitosis. The CPC complex has essential functions at the centromere in ensuring correct chromosome alignment and segregation and is required for chromatin-induced microtubule stabilization and spindle assembly. Involved in the bipolar attachment of spindle microtubules to kinetochores and is a key regulator for the onset of cytokinesis during mitosis. Required for central/midzone spindle assembly and cleavage furrow formation. Key component of the cytokinesis checkpoint, a process required to delay abscission to prevent both premature resolution of intercellular chromosome bridges and accumulation of DNA damage. Phosphorylates 'Ser-10' of histone H3 during mitosis. The sequence is that of Aurora kinase B-A (aurkb-a) from Xenopus laevis (African clawed frog).